Consider the following 183-residue polypeptide: DNA-directed RNA polymerase subunit Rpo7 (183 aa).

An S1 motif domain is found at 82–164 (HEVIEGEVSQ…RLPRIALTMK (83 aa)).

The protein belongs to the eukaryotic RPB7/RPC8 RNA polymerase subunit family. As to quaternary structure, part of the 13-subunit RNA polymerase complex. Forms a stalk with Rpo4 that extends from the main structure.

Its subcellular location is the cytoplasm. It catalyses the reaction RNA(n) + a ribonucleoside 5'-triphosphate = RNA(n+1) + diphosphate. In terms of biological role, DNA-dependent RNA polymerase (RNAP) catalyzes the transcription of DNA into RNA using the four ribonucleoside triphosphates as substrates. Functionally, reconstitution experiments show this subunit is required for basic activity. This is DNA-directed RNA polymerase subunit Rpo7 from Sulfolobus acidocaldarius (strain ATCC 33909 / DSM 639 / JCM 8929 / NBRC 15157 / NCIMB 11770).